The sequence spans 1246 residues: Stromal processing peptidase, chloroplastic (1246 aa).

A chloroplast-targeting transit peptide spans 1–136 (MASFPSPPLA…AKIRRRHVLH (136 aa)). Residue H228 coordinates Zn(2+). E231 (proton acceptor) is an active-site residue. Residue H232 coordinates Zn(2+). The active site involves E302. E309 contributes to the Zn(2+) binding site.

This sequence belongs to the peptidase M16 family. Requires Zn(2+) as cofactor. As to expression, widely expressed.

The protein localises to the plastid. Its subcellular location is the chloroplast stroma. Its function is as follows. Cleaves presequences (transit peptides) from chloroplastic protein precursors. Initially recognizes a precursor by binding to the C-terminus of its transit peptide and then removes the transit peptide in a single endoproteolytic step. In a next step, pursues the cleavage of transit peptide to a subfragment form. This chain is Stromal processing peptidase, chloroplastic, found in Oryza sativa subsp. indica (Rice).